A 290-amino-acid chain; its full sequence is Dihydroorotate dehydrogenase B (NAD(+)), catalytic subunit (290 aa).

Residues Ser17 and 42 to 43 (KT) each bind FMN. Substrate contacts are provided by residues Lys42, 67 to 71 (NAIGL), and Asn117. Asn117 is an FMN binding site. Catalysis depends on Ser120, which acts as the Nucleophile. Residues Lys152 and Ile177 each contribute to the FMN site. Residue 178–179 (NT) participates in substrate binding. Residues Gly203, 229–230 (GG), and 251–252 (GT) contribute to the FMN site.

It belongs to the dihydroorotate dehydrogenase family. Type 1 subfamily. In terms of assembly, heterotetramer of 2 PyrK and 2 PyrD type B subunits. Requires FMN as cofactor.

It localises to the cytoplasm. The enzyme catalyses (S)-dihydroorotate + NAD(+) = orotate + NADH + H(+). It participates in pyrimidine metabolism; UMP biosynthesis via de novo pathway; orotate from (S)-dihydroorotate (NAD(+) route): step 1/1. Functionally, catalyzes the conversion of dihydroorotate to orotate with NAD(+) as electron acceptor. This is Dihydroorotate dehydrogenase B (NAD(+)), catalytic subunit (pyrD) from Saccharolobus solfataricus (strain ATCC 35092 / DSM 1617 / JCM 11322 / P2) (Sulfolobus solfataricus).